A 52-amino-acid chain; its full sequence is Unknown protein from spot 415 of 2D-PAGE of etiolated coleoptile (52 aa).

This chain is Unknown protein from spot 415 of 2D-PAGE of etiolated coleoptile, found in Zea mays (Maize).